The following is a 33-amino-acid chain: Kappa-theraphotoxin-Pg2a (33 aa).

3 cysteine pairs are disulfide-bonded: Cys-2/Cys-16, Cys-9/Cys-21, and Cys-15/Cys-28.

In terms of tissue distribution, expressed by the venom gland.

It is found in the secreted. Gating modifier of Kv2.1/KCNB1 channels. This chain is Kappa-theraphotoxin-Pg2a, found in Chilobrachys guangxiensis (Chinese earth tiger tarantula).